Here is a 52-residue protein sequence, read N- to C-terminus: Large ribosomal subunit protein bL32c (52 aa).

It belongs to the bacterial ribosomal protein bL32 family.

Its subcellular location is the plastid. It is found in the chloroplast. The chain is Large ribosomal subunit protein bL32c from Eucalyptus globulus subsp. globulus (Tasmanian blue gum).